The sequence spans 86 residues: UPF0367 protein NATL1_01981 (86 aa).

Belongs to the UPF0367 family.

This Prochlorococcus marinus (strain NATL1A) protein is UPF0367 protein NATL1_01981.